Consider the following 4576-residue polypeptide: Mucin-2 (4576 aa).

The signal sequence occupies residues 1 to 20 (MGLPLARLVAACLVLALAKG). Ser-21 carries the phosphoserine modification. One can recognise a VWFD 1 domain in the interval 32 to 205 (HVCSTWGDFH…KINKPEVQCE (174 aa)). Cystine bridges form between Cys-34–Cys-166, Cys-56–Cys-204, Cys-64–Cys-163, Cys-216–Cys-253, Cys-223–Cys-248, Cys-235–Cys-273, Cys-255–Cys-261, Cys-263–Cys-289, Cys-293–Cys-327, Cys-306–Cys-319, Cys-310–Cys-349, Cys-329–Cys-343, Cys-351–Cys-373, Cys-368–Cys-385, Cys-371–Cys-380, Cys-389–Cys-526, Cys-411–Cys-561, Cys-433–Cys-441, Cys-572–Cys-617, Cys-586–Cys-612, Cys-599–Cys-637, Cys-619–Cys-625, Cys-627–Cys-652, Cys-659–Cys-696, Cys-672–Cys-686, Cys-676–Cys-716, Cys-698–Cys-710, Cys-718–Cys-740, and Cys-738–Cys-747. Asp-46 lines the Ca(2+) pocket. The Cu(+) site is built by Met-143 and Met-151. Cu(2+) is bound at residue Glu-153. A glycan (N-linked (GlcNAc...) asparagine) is linked at Asn-160. Ca(2+) is bound by residues Asp-168, Asn-170, and Glu-177. His-275 is a binding site for Cu(2+). Residues 293 to 349 (CPNNMVYLESSSPCVDTCSHLEVSSLCEEHYMDGCFCPEGTVYDDITGSGCIPVSQC) form the TIL domain. Residue His-322 coordinates Cu(2+). Met-324 lines the Cu(+) pocket. In terms of domain architecture, VWFD 2 spans 387–562 (ETCALEGGSH…NTWKAQSSCH (176 aa)). Asp-401 serves as a coordination point for Ca(2+). Asn-421 is a glycosylation site (N-linked (GlcNAc...) asparagine). Asn-528, Asn-530, Leu-532, Asp-535, and Asp-536 together coordinate Ca(2+). Asn-668 carries N-linked (GlcNAc...) asparagine glycosylation. The N-linked (GlcNAc...) asparagine glycan is linked to Asn-768. Intrachain disulfides connect Cys-782–Cys-818, Cys-800–Cys-812, Cys-820–Cys-843, Cys-837–Cys-855, Cys-841–Cys-850, Cys-859–Cys-990, Cys-881–Cys-1025, Cys-890–Cys-987, Cys-907–Cys-914, Cys-1035–Cys-1078, Cys-1049–Cys-1073, Cys-1060–Cys-1100, Cys-1080–Cys-1088, Cys-1090–Cys-1115, Cys-1106–Cys-1135, Cys-1119–Cys-1161, Cys-1143–Cys-1185, Cys-1165–Cys-1179, Cys-1187–Cys-1211, Cys-1206–Cys-1236, and Cys-1209–Cys-1219. Asn-838 carries an N-linked (GlcNAc...) asparagine glycan. A VWFD 3 domain is found at 857–1026 (STCSIYGSGH…NSWKEASTCP (170 aa)). Asp-871 lines the Ca(2+) pocket. Asn-893 carries an N-linked (GlcNAc...) asparagine glycan. Ca(2+)-binding residues include Asn-992, Asp-994, Asn-999, and Asp-1000. N-linked (GlcNAc...) asparagine glycans are attached at residues Asn-1137 and Asn-1152. Asn-1213, Asn-1228, and Asn-1244 each carry an N-linked (GlcNAc...) asparagine glycan. Residues Thr-1265, Thr-1268, Thr-1269, Thr-1281, and Thr-1292 are each glycosylated (O-linked (GalNAc) threonine). The Ca(2+) site is built by Asn-1305, His-1308, Gly-1315, Asp-1316, and Glu-1318. Residue Asn-1352 is glycosylated (N-linked (GlcNAc...) asparagine). Residues Asp-1375 and Tyr-1376 each coordinate Ca(2+). 5 consecutive repeat copies span residues 1395–1415 (SPTT…PTTL), 1416–1427 (PTSSPVTSSATL), 1428–1437 (PTTSSITSTI), 1438–1453 (SPTT…SPTT), and 1454–1460 (SPTTSPT). Residues 1395–2866 (SPTTSTTTLS…PTTSSTFTTP (1472 aa)) form a disordered region. The stretch at 1478–1497 (PSTTSPTTPSTTPSTTSPTT) is one 7B repeat. The stretch at 1498–1510 (PSTTSPTTPTSTS) is one 8A repeat. A 9B repeat occupies 1530 to 1556 (SPTTSPTTPSTTSPTISTTTSTISPTT). Residues 1557-1572 (PSTTSPNTPSTTSSTI) form a 10A repeat. A 10B repeat occupies 1573–1588 (PSTTSPTTPSTTSPTI). An 11A repeat occupies 1589-1607 (STTTSTTSPTTPSTTSPTT). One copy of the 11B repeat lies at 1608 to 1634 (PSTTSPTTPSTTSPTISTTTLTTSPTT). Tandem repeats lie at residues 1635–1642 (PSTTSPTT) and 1665–1681 (ISPT…LSTT). Residues Asn-2529 and Asn-2910 are each glycosylated (N-linked (GlcNAc...) asparagine). Composition is skewed to low complexity over residues 2975 to 3623 (PSST…GSTP) and 3631 to 3706 (PGPT…TSPS). The segment at 2975 to 3706 (PSSTTTETPT…SSTSPITSPS (732 aa)) is disordered. Residues Asn-3734, Asn-3745, and Asn-3756 are each glycosylated (N-linked (GlcNAc...) asparagine). Over residues 3764-3774 (STPTPSTPTPT) the composition is skewed to pro residues. The interval 3764-3806 (STPTPSTPTPTPSQTTTPSTTSSKSTPSTPQSTSPKSTLSTPT) is disordered. A compositionally biased stretch (low complexity) spans 3775 to 3806 (PSQTTTPSTTSSKSTPSTPQSTSPKSTLSTPT). Residues Asn-3823, Asn-3830, and Asn-3903 are each glycosylated (N-linked (GlcNAc...) asparagine). The region spanning 3880 to 4063 (CYCTGWGDPH…VNDPSKPHCP (184 aa)) is the VWFD 4 domain. 3 disulfides stabilise this stretch: Cys-3882–Cys-4023, Cys-3904–Cys-4062, and Cys-3928–Cys-3936. Residues Asn-3991, Asn-4017, Asn-4028, Asn-4083, Asn-4149, Asn-4183, Asn-4254, Asn-4277, Asn-4351, Asn-4366, Asn-4434, Asn-4465, and Asn-4488 are each glycosylated (N-linked (GlcNAc...) asparagine). VWFC domains follow at residues 4213-4282 (CVGP…TSCK) and 4320-4387 (GVCV…KKCQ). Intrachain disulfides connect Cys-4471–Cys-4518, Cys-4485–Cys-4532, Cys-4494–Cys-4548, and Cys-4498–Cys-4550. The 86-residue stretch at 4471–4556 (CSAVSVMKEI…SCLCQDTVCG (86 aa)) folds into the CTCK domain.

In terms of assembly, homomultimer; disulfide-linked. The N- and C-terminus mediate their assembly into higher order structures to form filaments. The CTCK domains of two polypeptides associate in the endoplasmic reticulum to generate intermolecularly disulfide-bonded dimers. These dimers progress to the Golgi apparatus, which is a more acidic environment than the endoplasmic reticulum. Under acidic conditions, the N-termini form non-covalent intermolecular interactions that juxtapose assemblies of the third VWD domain (VWD3) from different CTCK-linked dimers. The VWD3 assemblies then become disulfide bonded to one another to produce long, disulfide-linked polymers that remain highly compact until secretion. Interacts with FCGBP. Interacts with AGR2; disulfide-linked. In terms of processing, O-glycosylated. O-glycosylation is required for mucin assembly. Goblet cells synthesize two forms of mucin that differ in branched chain O-glycosylation and the site of production in the colon. May undergo proteolytic cleavage in the outer mucus layer of the colon, contributing to the expanded volume and loose nature of this layer which allows for bacterial colonization in contrast to the inner mucus layer which is dense and devoid of bacteria. Post-translationally, at low pH of 6 and under, undergoes autocatalytic cleavage in vitro in the N-terminal region of the fourth VWD domain. It is likely that this also occurs in vivo and is triggered by the low pH of the late secretory pathway. In terms of tissue distribution, highly expressed in goblet cells of the colon with lower levels in the small intestine and no expression in the stomach (at protein level).

The protein localises to the secreted. Coats the epithelia of the intestines and other mucus membrane-containing organs to provide a protective, lubricating barrier against particles and infectious agents at mucosal surfaces. Major constituent of the colon mucus, which is mainly formed by large polymeric networks of MUC2 secreted by goblet cells that cover the exposed surfaces of intestine. MUC2 networks form hydrogels that guard the underlying epithelium from pathogens and other hazardous matter entering from the outside world, while permitting nutrient absorption and gas exchange. Acts as a divalent copper chaperone that protects intestinal cells from copper toxicity and facilitates nutritional copper unptake into cells. Binds both Cu(2+) and its reduced form, Cu(1+), at two juxtaposed binding sites: Cu(2+), once reduced to Cu(1+) by vitamin C (ascorbate) or other dietary antioxidants, transits to the other binding site. MUC2-bound Cu(1+) is protected from oxidation in aerobic environments, and can be released for nutritional delivery to cells. Mucin gels store antimicrobial molecules that participate in innate immunity. Mucin glycoproteins also house and feed the microbiome, lubricate tissue surfaces, and may facilitate the removal of contaminants and waste products from the body. Goblet cells synthesize two forms of MUC2 mucin that differ in branched chain O-glycosylation and the site of production in the colon: a (1) 'thick' mucus that wraps the microbiota to form fecal pellets is produced in the proximal, ascending colon. 'Thick' mucus transits along the descending colon and is lubricated by a (2) 'thin' MUC2 mucus produced in the distal colon which adheres to the 'thick' mucus. The sequence is that of Mucin-2 from Mus musculus (Mouse).